The chain runs to 506 residues: Maturase K (506 aa).

It belongs to the intron maturase 2 family. MatK subfamily.

The protein resides in the plastid. It localises to the chloroplast. In terms of biological role, usually encoded in the trnK tRNA gene intron. Probably assists in splicing its own and other chloroplast group II introns. The protein is Maturase K of Prunus persica (Peach).